The chain runs to 348 residues: NADH-ubiquinone oxidoreductase chain 2 (348 aa).

10 helical membrane-spanning segments follow: residues 3–23, 24–44, 60–80, 95–115, 136–156, 177–197, 198–218, 239–259, 273–293, and 325–345; these read PFIL…TFAS, SHWL…IPLM, FITQ…NAWI, ASML…HFWL, LAPF…ITFL, ILAY…QFNQ, QLAL…FMIF, LTAI…LSGF, DIPL…YFYL, and LAIS…TLAL.

This sequence belongs to the complex I subunit 2 family.

It localises to the mitochondrion inner membrane. It carries out the reaction a ubiquinone + NADH + 5 H(+)(in) = a ubiquinol + NAD(+) + 4 H(+)(out). Its function is as follows. Core subunit of the mitochondrial membrane respiratory chain NADH dehydrogenase (Complex I) that is believed to belong to the minimal assembly required for catalysis. Complex I functions in the transfer of electrons from NADH to the respiratory chain. The immediate electron acceptor for the enzyme is believed to be ubiquinone. In Gadus morhua (Atlantic cod), this protein is NADH-ubiquinone oxidoreductase chain 2 (MT-ND2).